The following is a 459-amino-acid chain: Argininosuccinate lyase (459 aa).

The protein belongs to the lyase 1 family. Argininosuccinate lyase subfamily.

Its subcellular location is the cytoplasm. The catalysed reaction is 2-(N(omega)-L-arginino)succinate = fumarate + L-arginine. Its pathway is amino-acid biosynthesis; L-arginine biosynthesis; L-arginine from L-ornithine and carbamoyl phosphate: step 3/3. The polypeptide is Argininosuccinate lyase (Desulforudis audaxviator (strain MP104C)).